The primary structure comprises 132 residues: Fatty acid-binding protein 12 (132 aa).

Residues R107 and 127-129 (RTY) each bind a fatty acid.

Belongs to the calycin superfamily. Fatty-acid binding protein (FABP) family. As to expression, highly expressed in adult retina and testis.

Its function is as follows. May play a role in lipid transport. In Mus musculus (Mouse), this protein is Fatty acid-binding protein 12 (Fabp12).